The primary structure comprises 516 residues: Multicopper oxidase CueO (516 aa).

The tat-type signal signal peptide spans 1–28; sequence MQRRDFLKYSVALGVASALPLWSRAVFA. Plastocyanin-like domains follow at residues 55-165 and 227-292; these read GQST…IEDD and PRGW…DNKP. Residues His101, His103, His141, and His143 each contribute to the Cu cation site. The methionine-rich region stretch occupies residues 355-400; it reads MDPMLDMMGMQMLMEKYGDQAMAGMDHSQMMGHMGHGNMNHMNHGG. One can recognise a Plastocyanin-like 3 domain in the interval 402–516; sequence FDFHHANKIN…DTGMMLGFTV (115 aa). The Cu cation site is built by His443, His446, His448, His499, Cys500, His501, and His505.

This sequence belongs to the multicopper oxidase family. Monomer. Requires Cu cation as cofactor. Post-translationally, exported by the Tat system. The position of the signal peptide cleavage has been experimentally proven.

It is found in the periplasm. The catalysed reaction is 4 Cu(+) + O2 + 4 H(+) = 4 Cu(2+) + 2 H2O. Its activity is regulated as follows. Ferroxidase and phenoloxidase activities are enhanced considerably in the presence of excess copper ions. A labile regulatory copper ion near the T1 copper site is important for the copper associated activation of enzyme activity. Ag(+) acts as a potent inhibitor of oxidase activity by binding at Cu(+) binding sites, blocking Cu(+) substrate binding and oxidation. pPD oxidase activity is strongly inhibited by sodium azide, an inhibitor of the electron transfer. Functionally, multicopper oxidase involved in copper homeostasis and copper tolerance under aerobic conditions. Is responsible for the oxidation of Cu(+) to the less harmful Cu(2+) in the periplasm, thereby preventing Cu(+) from entering the cytoplasm. Probably primarily functions as a cuprous oxidase in vivo. In terms of biological role, in vitro, in the presence of excess copper ions, exhibits ferroxidase and phenoloxidase activities. Fe(2+) is an excellent substrate in the presence of excess Cu(2+), but is inactive in the absence of Cu(2+). Oxidizes the phenolate iron siderophores enterobactin, 2,3-dihydroxybenzoate (2,3-DHB) and 3-hydroxyanthranilate (3-HAA). Oxidation and thus inactivation of enterobactin could protect cells from the interaction of enterobactin with copper and play a central role as an interface between copper detoxification and iron homeostasis. Also oxidizes a variety of phenolic model substrates, including 2,2'-azinobis(3-ethylbenzthiazolinesulfonic acid) (ABTS), p-phenylenediamine (pPD), 2,6-dimethoxyphenol (2,6-DMP) and 3,4-dihydroxybenzoic acid (3,4-DHB). In Escherichia coli (strain K12), this protein is Multicopper oxidase CueO.